A 536-amino-acid polypeptide reads, in one-letter code: Multicopper oxidase terE (536 aa).

The interval 1 to 21 (MHWHGLSQSTAPFSDGSPQAS) is disordered. Plastocyanin-like domains are found at residues 1-67 (MHWH…VEEK), 79-238 (ERIL…LSYN), and 354-488 (TVQK…VWMM). Residues His-2, His-4, His-48, and His-50 each contribute to the Cu cation site. Residue His-397 participates in Cu cation binding.

It belongs to the multicopper oxidase family.

The protein operates within secondary metabolite biosynthesis. Functionally, multicopper oxidase; part of the gene cluster that mediates the biosynthesis of terrein, a fungal metabolite with ecological, antimicrobial, antiproliferative, and antioxidative activities. The first step in the pathway is performed by the polyketide synthase terA that produces 4-hydroxy-6-methylpyranon (4-HMP), orsellinic acid (OA), and 2,3-dehydro-6-hydroxymellein (2,3-dehydro-6-HM) by condensing acetyl-CoA with two, three, or four malonyl-CoA units, respectively. 4-HMP and OA are not pathway intermediates, but are rather shunt or side products. 2,3-dehydro-6-HM is further converted to 6-hydroxymellein (6-HM) by the 6-hydroxymellein synthase terB. The monooxygenases terC and terD, the multicopper oxidase terE and the Kelch-like protein terF are then involved in the transformation of 6-HM to terrein. Even if they are co-regulated with the other terrein cluster genes, terH and terI seem to be dispensable for terrein production; whereas one or both of the 2 transporters terG and terJ are probably required for efficient secretion of metabolites. This chain is Multicopper oxidase terE, found in Aspergillus terreus (strain NIH 2624 / FGSC A1156).